The primary structure comprises 738 residues: Polyribonucleotide nucleotidyltransferase (738 aa).

Mg(2+)-binding residues include Asp-514 and Asp-520. The KH domain occupies 580-639 (PRIITVKIPVDKIGEVIGPKGKMINQIQEDTGAEITIEDDGTIYIGAQVGSQAEAARATI). Positions 651-723 (GERYLGTVVK…SRGKLSLIPV (73 aa)) constitute an S1 motif domain.

The protein belongs to the polyribonucleotide nucleotidyltransferase family. Mg(2+) is required as a cofactor.

It localises to the cytoplasm. It carries out the reaction RNA(n+1) + phosphate = RNA(n) + a ribonucleoside 5'-diphosphate. In terms of biological role, involved in mRNA degradation. Catalyzes the phosphorolysis of single-stranded polyribonucleotides processively in the 3'- to 5'-direction. The polypeptide is Polyribonucleotide nucleotidyltransferase (Streptomyces avermitilis (strain ATCC 31267 / DSM 46492 / JCM 5070 / NBRC 14893 / NCIMB 12804 / NRRL 8165 / MA-4680)).